Consider the following 1065-residue polypeptide: Ceruloplasmin (1065 aa).

Residues 1-19 (MKILILGIFLFLCSTPAWA) form the signal peptide. 2 consecutive Plastocyanin-like domains span residues 20–200 (KEKH…LIIC) and 209–357 (KEKH…VQEC). Residues Y55, G64, and Y67 each coordinate Na(+). Cu(2+)-binding residues include H120 and H122. H120 is a binding site for O2. A Ca(2+)-binding site is contributed by K128. N-linked (GlcNAc...) (complex) asparagine glycosylation occurs at N138. Ca(2+) is bound by residues Q143, D146, and D147. C174 and C200 are joined by a disulfide. H180 and H182 together coordinate Cu(2+). H180 is a binding site for O2. S256 contacts Na(+). A disulfide bridge links C276 with C357. Cu(2+) contacts are provided by H295, C338, and H343. N-linked (GlcNAc...) (complex) asparagine glycans are attached at residues N358 and N397. Plastocyanin-like domains follow at residues 370–560 (HVRH…MKIC) and 570–718 (RQKD…VNQC). Na(+) contacts are provided by F408, G417, and Y420. An intrachain disulfide couples C534 to C560. N588 carries an N-linked (GlcNAc...) asparagine glycan. Position 617 (S617) interacts with Na(+). Cysteines 637 and 718 form a disulfide. Cu(2+) contacts are provided by H656, C699, H704, and M709. Catalysis depends on C699, which acts as the Nucleophile; for glutathione peroxidase activity. At S722 the chain carries Phosphoserine; by FAM20C. 2 Plastocyanin-like domains span residues 730-900 (GERT…LIVC) and 908-1061 (FNPR…QNED). N-linked (GlcNAc...) (complex) asparagine glycosylation occurs at N762. Na(+) is bound by residues F767, G776, and Y779. An intrachain disulfide couples C874 to C900. N926 carries an N-linked (GlcNAc...) asparagine glycan. S955 is a Na(+) binding site. 8 residues coordinate Cu(2+): H994, H997, H999, H1039, C1040, H1041, H1045, and M1050. Residues H997 and H999 each contribute to the O2 site. H1041 provides a ligand contact to O2.

The protein belongs to the multicopper oxidase family. Found in a complex with MPO and LTF; interacts directly with MPO and LTF, which allows Fe(3+) incorporation into LTF, activation of CP ferroxidase activity and protection of CP antioxidant properties by MPO. Cu(2+) is required as a cofactor. As to expression, expressed by the liver and secreted in plasma.

Its subcellular location is the secreted. The catalysed reaction is 4 Fe(2+) + O2 + 4 H(+) = 4 Fe(3+) + 2 H2O. It carries out the reaction 4 Cu(+) + O2 + 4 H(+) = 4 Cu(2+) + 2 H2O. The enzyme catalyses a hydroperoxide + 2 glutathione = an alcohol + glutathione disulfide + H2O. It catalyses the reaction 4 nitric oxide + O2 + 2 H2O = 4 nitrite + 4 H(+). The catalysed reaction is 2 glutathione + H2O2 = glutathione disulfide + 2 H2O. Its function is as follows. Multifunctional blue, copper-binding (6-7 atoms per molecule) glycoprotein. It has ferroxidase activity oxidizing Fe(2+) to Fe(3+) without releasing radical oxygen species. It is involved in iron transport across the cell membrane. Copper ions provide a large number of enzymatic activites. Oxidizes highly toxic ferrous ions to the ferric state for further incorporation onto apo-transferrins, catalyzes Cu(+) oxidation and promotes the oxidation of biogenic amines such as norepinephrin and serotonin. Provides Cu(2+) ions for the ascorbate-mediated deaminase degradation of the heparan sulfate chains of GPC1. Has glutathione peroxidase-like activity, can remove both hydrogen peroxide and lipid hydroperoxide in the presence of thiols. Also shows NO-oxidase and NO2 synthase activities that determine endocrine NO homeostasis. This Homo sapiens (Human) protein is Ceruloplasmin.